The primary structure comprises 234 residues: Filarial antigen Av33 (234 aa).

An N-terminal signal peptide occupies residues 1–17; it reads MKILSCLLLCTITVLEG. Cys135 and Cys230 form a disulfide bridge. The segment at 204–234 is disordered; sequence TSQASEATTIPTTTQTPVEAPETPSFCVPIY. A compositionally biased stretch (low complexity) spans 211–220; that stretch reads TTIPTTTQTP.

It belongs to the protease inhibitor I33 family.

The protein resides in the secreted. In terms of biological role, aspartyl protease inhibitor. In Acanthocheilonema viteae (Filarial nematode worm), this protein is Filarial antigen Av33.